The primary structure comprises 156 residues: Transcription elongation factor GreA (156 aa).

Positions 46-73 form a coiled coil; that stretch reads AEYHAAREKQSFIEGRIKELEALLSLAE.

It belongs to the GreA/GreB family.

Functionally, necessary for efficient RNA polymerase transcription elongation past template-encoded arresting sites. The arresting sites in DNA have the property of trapping a certain fraction of elongating RNA polymerases that pass through, resulting in locked ternary complexes. Cleavage of the nascent transcript by cleavage factors such as GreA or GreB allows the resumption of elongation from the new 3'terminus. GreA releases sequences of 2 to 3 nucleotides. This is Transcription elongation factor GreA from Cereibacter sphaeroides (strain ATCC 17025 / ATH 2.4.3) (Rhodobacter sphaeroides).